The primary structure comprises 981 residues: Rab3 GTPase-activating protein catalytic subunit (981 aa).

Phosphoserine occurs at positions 83, 379, 536, 579, 581, and 590. Residues 532–558 form a disordered region; sequence GKKTSLSDSTTSAYPGDAGKTGGQLGL. The segment at 591–614 is disordered; the sequence is DTEDLKGNGQESGKKGGPKEMANL. Ser664 carries the post-translational modification Phosphoserine.

This sequence belongs to the Rab3-GAP catalytic subunit family. In terms of assembly, the Rab3 GTPase-activating complex is a heterodimer composed of Rab3gap1 and Rab3gap2. The Rab3 GTPase-activating complex interacts with DMXL2. Interacts with LMAN1. As to expression, in the eye, it is highly expressed within the lens, particularly in the anterior lens epithelium and in a ring corresponding to the equatorial region where anterior cells are differentiating into lens fibers. Also highly expressed in the retina.

Its subcellular location is the cytoplasm. It localises to the endoplasmic reticulum. It is found in the golgi apparatus. The protein localises to the cis-Golgi network. In terms of biological role, catalytic subunit of the Rab3 GTPase-activating (Rab3GAP) complex composed of RAB3GAP1 and RAB3GAP2, which has GTPase-activating protein (GAP) activity towards various Rab3 subfamily members (RAB3A, RAB3B, RAB3C and RAB3D), RAB5A and RAB43, and guanine nucleotide exchange factor (GEF) activity towards RAB18. As part of the Rab3GAP complex, acts as a GAP for Rab3 proteins by converting active RAB3-GTP to the inactive form RAB3-GDP. Rab3 proteins are involved in regulated exocytosis of neurotransmitters and hormones. The Rab3GAP complex, acts as a GEF for RAB18 by promoting the conversion of inactive RAB18-GDP to the active form RAB18-GTP. Recruits and stabilizes RAB18 at the cis-Golgi membrane where RAB18 is most likely activated. Also involved in RAB18 recruitment at the endoplasmic reticulum (ER) membrane where it maintains proper ER structure. Required for normal eye and brain development. May participate in neurodevelopmental processes such as proliferation, migration and differentiation before synapse formation, and non-synaptic vesicular release of neurotransmitters. This chain is Rab3 GTPase-activating protein catalytic subunit, found in Mus musculus (Mouse).